The chain runs to 179 residues: Large ribosomal subunit protein uL5 (179 aa).

Belongs to the universal ribosomal protein uL5 family. In terms of assembly, part of the 50S ribosomal subunit; part of the 5S rRNA/L5/L18/L25 subcomplex. Contacts the 5S rRNA and the P site tRNA. Forms a bridge to the 30S subunit in the 70S ribosome.

Functionally, this is one of the proteins that bind and probably mediate the attachment of the 5S RNA into the large ribosomal subunit, where it forms part of the central protuberance. In the 70S ribosome it contacts protein S13 of the 30S subunit (bridge B1b), connecting the 2 subunits; this bridge is implicated in subunit movement. Contacts the P site tRNA; the 5S rRNA and some of its associated proteins might help stabilize positioning of ribosome-bound tRNAs. This Nitratidesulfovibrio vulgaris (strain DSM 19637 / Miyazaki F) (Desulfovibrio vulgaris) protein is Large ribosomal subunit protein uL5.